The chain runs to 146 residues: 3-hydroxyacyl-[acyl-carrier-protein] dehydratase FabZ (146 aa).

Histidine 49 is an active-site residue.

The protein belongs to the thioester dehydratase family. FabZ subfamily.

It localises to the cytoplasm. The enzyme catalyses a (3R)-hydroxyacyl-[ACP] = a (2E)-enoyl-[ACP] + H2O. Functionally, involved in unsaturated fatty acids biosynthesis. Catalyzes the dehydration of short chain beta-hydroxyacyl-ACPs and long chain saturated and unsaturated beta-hydroxyacyl-ACPs. The protein is 3-hydroxyacyl-[acyl-carrier-protein] dehydratase FabZ of Ectopseudomonas mendocina (strain ymp) (Pseudomonas mendocina).